Consider the following 20-residue polypeptide: Protein C activator (20 aa).

The Peptidase S1 domain maps to 1–20 (VVGGDECNINEHRSLALMYA).

This sequence belongs to the peptidase S1 family. Snake venom subfamily. Monomer. In terms of processing, glycosylated. In terms of tissue distribution, expressed by the venom gland.

The protein resides in the secreted. With respect to regulation, inhibited by calcium. Its function is as follows. Snake venom serine protease that selectively cleaves the heavy chain of protein C (PROC). This activation is thrombomodulin-independent. The polypeptide is Protein C activator (Agkistrodon bilineatus (Cantil)).